Here is a 514-residue protein sequence, read N- to C-terminus: ATP synthase subunit alpha (514 aa).

170-177 (GDRQTGKT) contacts ATP.

It belongs to the ATPase alpha/beta chains family. F-type ATPases have 2 components, CF(1) - the catalytic core - and CF(0) - the membrane proton channel. CF(1) has five subunits: alpha(3), beta(3), gamma(1), delta(1), epsilon(1). CF(0) has three main subunits: a(1), b(2) and c(9-12). The alpha and beta chains form an alternating ring which encloses part of the gamma chain. CF(1) is attached to CF(0) by a central stalk formed by the gamma and epsilon chains, while a peripheral stalk is formed by the delta and b chains.

The protein resides in the cell inner membrane. The catalysed reaction is ATP + H2O + 4 H(+)(in) = ADP + phosphate + 5 H(+)(out). Its function is as follows. Produces ATP from ADP in the presence of a proton gradient across the membrane. The alpha chain is a regulatory subunit. This is ATP synthase subunit alpha from Psychrobacter arcticus (strain DSM 17307 / VKM B-2377 / 273-4).